The primary structure comprises 385 residues: 1-deoxy-D-xylulose 5-phosphate reductoisomerase 1 (385 aa).

NADPH is bound by residues T11, G12, S13, I14, N39, and N122. Position 123 (K123) interacts with 1-deoxy-D-xylulose 5-phosphate. E124 contacts NADPH. Position 148 (D148) interacts with Mn(2+). Residues S149, E150, S174, and H197 each contribute to the 1-deoxy-D-xylulose 5-phosphate site. E150 provides a ligand contact to Mn(2+). G203 provides a ligand contact to NADPH. Positions 210, 215, 216, and 219 each coordinate 1-deoxy-D-xylulose 5-phosphate. E219 provides a ligand contact to Mn(2+).

It belongs to the DXR family. Mg(2+) is required as a cofactor. It depends on Mn(2+) as a cofactor.

The enzyme catalyses 2-C-methyl-D-erythritol 4-phosphate + NADP(+) = 1-deoxy-D-xylulose 5-phosphate + NADPH + H(+). It functions in the pathway isoprenoid biosynthesis; isopentenyl diphosphate biosynthesis via DXP pathway; isopentenyl diphosphate from 1-deoxy-D-xylulose 5-phosphate: step 1/6. Functionally, catalyzes the NADPH-dependent rearrangement and reduction of 1-deoxy-D-xylulose-5-phosphate (DXP) to 2-C-methyl-D-erythritol 4-phosphate (MEP). In Bacillus anthracis, this protein is 1-deoxy-D-xylulose 5-phosphate reductoisomerase 1.